The chain runs to 393 residues: Actin-related protein 2 (393 aa).

Residues 158–160 (GDG), 212–216 (RQMKE), and 303–308 (GGTTMY) each bind ATP.

Belongs to the actin family. ARP2 subfamily. Component of the Arp2/3 complex.

It is found in the cytoplasm. The protein localises to the cytoskeleton. Functionally, functions as ATP-binding component of the Arp2/3 complex which is involved in regulation of actin polymerization and together with an activating nucleation-promoting factor (NPF) mediates the formation of branched actin networks. Seems to contact the pointed end of the daughter actin filament. The chain is Actin-related protein 2 (arx-2) from Caenorhabditis briggsae.